Consider the following 141-residue polypeptide: Putative pre-16S rRNA nuclease (141 aa).

Belongs to the YqgF nuclease family.

It localises to the cytoplasm. Its function is as follows. Could be a nuclease involved in processing of the 5'-end of pre-16S rRNA. The chain is Putative pre-16S rRNA nuclease from Shewanella denitrificans (strain OS217 / ATCC BAA-1090 / DSM 15013).